Consider the following 315-residue polypeptide: Ribosomal protein L11 methyltransferase (315 aa).

Thr164, Gly185, Asp207, and Asn249 together coordinate S-adenosyl-L-methionine.

The protein belongs to the methyltransferase superfamily. PrmA family.

The protein resides in the cytoplasm. It carries out the reaction L-lysyl-[protein] + 3 S-adenosyl-L-methionine = N(6),N(6),N(6)-trimethyl-L-lysyl-[protein] + 3 S-adenosyl-L-homocysteine + 3 H(+). In terms of biological role, methylates ribosomal protein L11. The chain is Ribosomal protein L11 methyltransferase from Lactobacillus gasseri (strain ATCC 33323 / DSM 20243 / BCRC 14619 / CIP 102991 / JCM 1131 / KCTC 3163 / NCIMB 11718 / NCTC 13722 / AM63).